Consider the following 128-residue polypeptide: 3-aminoacrylate deaminase RutC (128 aa).

This sequence belongs to the RutC family.

The catalysed reaction is (Z)-3-aminoacrylate + H2O + H(+) = 3-oxopropanoate + NH4(+). Functionally, involved in pyrimidine catabolism. Catalyzes the deamination of 3-aminoacrylate to malonic semialdehyde, a reaction that can also occur spontaneously. RutC may facilitate the reaction and modulate the metabolic fitness, rather than catalyzing essential functions. The polypeptide is 3-aminoacrylate deaminase RutC (Pantoea ananatis (strain LMG 20103)).